Reading from the N-terminus, the 531-residue chain is Membrane protein insertase YidC (531 aa).

4 helical membrane passes run 5–25, 343–363, 415–435, and 489–509; these read ALIA…LFSP, GNYG…FYPL, LPML…MFSI, and PVVF…YWLV.

This sequence belongs to the OXA1/ALB3/YidC family. Type 1 subfamily. As to quaternary structure, interacts with the Sec translocase complex via SecD. Specifically interacts with transmembrane segments of nascent integral membrane proteins during membrane integration.

Its subcellular location is the cell inner membrane. In terms of biological role, required for the insertion and/or proper folding and/or complex formation of integral membrane proteins into the membrane. Involved in integration of membrane proteins that insert both dependently and independently of the Sec translocase complex, as well as at least some lipoproteins. Aids folding of multispanning membrane proteins. The polypeptide is Membrane protein insertase YidC (Geobacter sulfurreducens (strain ATCC 51573 / DSM 12127 / PCA)).